A 337-amino-acid chain; its full sequence is Ketol-acid reductoisomerase (NADP(+)) (337 aa).

A KARI N-terminal Rossmann domain is found at 3–183 (IDVFYDDDAD…GGGRAGVIPT (181 aa)). NADP(+) is bound by residues 26–29 (YGSQ), arginine 49, serine 52, serine 54, and 84–87 (DTSQ). Residue histidine 109 is part of the active site. Glycine 135 is a binding site for NADP(+). The region spanning 184–329 (TFEAETVTDL…EKLRDLMSWV (146 aa)) is the KARI C-terminal knotted domain. Mg(2+)-binding residues include aspartate 192, glutamate 196, glutamate 228, and glutamate 232. Residue serine 253 coordinates substrate.

This sequence belongs to the ketol-acid reductoisomerase family. Mg(2+) serves as cofactor.

It catalyses the reaction (2R)-2,3-dihydroxy-3-methylbutanoate + NADP(+) = (2S)-2-acetolactate + NADPH + H(+). The catalysed reaction is (2R,3R)-2,3-dihydroxy-3-methylpentanoate + NADP(+) = (S)-2-ethyl-2-hydroxy-3-oxobutanoate + NADPH + H(+). Its pathway is amino-acid biosynthesis; L-isoleucine biosynthesis; L-isoleucine from 2-oxobutanoate: step 2/4. It functions in the pathway amino-acid biosynthesis; L-valine biosynthesis; L-valine from pyruvate: step 2/4. Functionally, involved in the biosynthesis of branched-chain amino acids (BCAA). Catalyzes an alkyl-migration followed by a ketol-acid reduction of (S)-2-acetolactate (S2AL) to yield (R)-2,3-dihydroxy-isovalerate. In the isomerase reaction, S2AL is rearranged via a Mg-dependent methyl migration to produce 3-hydroxy-3-methyl-2-ketobutyrate (HMKB). In the reductase reaction, this 2-ketoacid undergoes a metal-dependent reduction by NADPH to yield (R)-2,3-dihydroxy-isovalerate. This is Ketol-acid reductoisomerase (NADP(+)) from Corynebacterium urealyticum (strain ATCC 43042 / DSM 7109).